Reading from the N-terminus, the 567-residue chain is MLYLLTIFSLLLPALAINARSNSNVAVYWGQNSGGSQQRLSYYCDSDAVDIVILSFMHQFPSPIQLNFANACEGTYTANGILQCQTIAEDIKYCQNKGKTILLSLGGAAGSYGFSDDATAKQFAHTLWDLFGNSKNLATNDRPFYDAVLDGFDFDIENNWSTGYPALATELRTLFQKDTSKNYYLGAAPQCPYPDASVGPLLKQSEIDFVFIQFYNNYCNLGSSSFNWDTWLNYAETDSPNKNIKLFVGVPASSRAAGSGYNDPSAVSQYLTSDILNSKYFGGISMWDVSAGWSNTNSNGNFVENMKAIVKKASPGEETTSSSTTTTTTTTSTTISSSSSSSKTSKTSTTSTTSSSISSTTSSTTSSTSSSSTSSSTSSTTSSSTTSSQISTTSTAPTSSTSLSSSTISTSASTSDTTSVTSSETTPVVTPSSLSSAITIPGDSTTTGISKSSSTKPATSTTSALSSSTTTVATIPDDKEIINTPTDTETTSKPPAIITESDATTITQNLTPSTTTKNVKTTSTNIVTEWVWAPTTLRTLTTTYQILTTRTHIETVFAEPSTVVIYN.

Positions 1 to 16 are cleaved as a signal peptide; it reads MLYLLTIFSLLLPALA. The GH18 domain maps to 23–313; the sequence is SNVAVYWGQN…ENMKAIVKKA (291 aa). Glutamate 157 serves as the catalytic Proton donor. Asparagine 159 carries an N-linked (GlcNAc...) asparagine glycan. Residues 313–471 form a disordered region; the sequence is ASPGEETTSS…TSALSSSTTT (159 aa). 2 stretches are compositionally biased toward low complexity: residues 319–436 and 444–471; these read TTSS…SLSS and STTT…STTT.

Belongs to the glycosyl hydrolase 18 family. Chitinase class III subfamily.

The protein resides in the secreted. The catalysed reaction is Random endo-hydrolysis of N-acetyl-beta-D-glucosaminide (1-&gt;4)-beta-linkages in chitin and chitodextrins.. Chitinase involved in the remodeling of chitin in the fungal cell wall. Plays a role in cell separation. The protein is Chitinase 3 (CHT3) of Candida albicans (strain SC5314 / ATCC MYA-2876) (Yeast).